The sequence spans 427 residues: tRNA(Ile)-lysidine synthase (427 aa).

Position 25–30 (25–30 (SGGLDS)) interacts with ATP.

Belongs to the tRNA(Ile)-lysidine synthase family.

Its subcellular location is the cytoplasm. The catalysed reaction is cytidine(34) in tRNA(Ile2) + L-lysine + ATP = lysidine(34) in tRNA(Ile2) + AMP + diphosphate + H(+). In terms of biological role, ligates lysine onto the cytidine present at position 34 of the AUA codon-specific tRNA(Ile) that contains the anticodon CAU, in an ATP-dependent manner. Cytidine is converted to lysidine, thus changing the amino acid specificity of the tRNA from methionine to isoleucine. In Histophilus somni (strain 2336) (Haemophilus somnus), this protein is tRNA(Ile)-lysidine synthase.